A 593-amino-acid polypeptide reads, in one-letter code: ATP-dependent RNA helicase MRH4, mitochondrial (593 aa).

The transit peptide at 1-106 (MFPLRAQSAS…QLRIFPTVRA (106 aa)) directs the protein to the mitochondrion. The span at 42–51 (GANGANRANG) shows a compositional bias: low complexity. The disordered stretch occupies residues 42-63 (GANGANRANGTNSSQPESQSSK). The span at 52-63 (TNSSQPESQSSK) shows a compositional bias: polar residues. The short motif at 130-137 (VLKPTPIQ) is the Q motif element. Positions 181-399 (INSLQKLKVF…NRIFPTDDSI (219 aa)) constitute a Helicase ATP-binding domain. 194–201 (AETGSGKT) is a binding site for ATP. Residues 347–350 (DEAD) carry the DEAD box motif. One can recognise a Helicase C-terminal domain in the interval 433-593 (ALAQALYAIT…NAVKRGIQMG (161 aa)).

This sequence belongs to the DEAD box helicase family. MRH4 subfamily.

It localises to the mitochondrion. The enzyme catalyses ATP + H2O = ADP + phosphate + H(+). In terms of biological role, ATP-binding RNA helicase involved in mitochondrial RNA metabolism. Required for maintenance of mitochondrial DNA. The polypeptide is ATP-dependent RNA helicase MRH4, mitochondrial (MRH4) (Scheffersomyces stipitis (strain ATCC 58785 / CBS 6054 / NBRC 10063 / NRRL Y-11545) (Yeast)).